We begin with the raw amino-acid sequence, 301 residues long: Syntaxin-17 (301 aa).

An N-acetylserine modification is found at Ser-2. Residues Ser-2 to Lys-227 are Cytoplasmic-facing. N6-acetyllysine is present on Lys-41. Positions Asp-49–Pro-128 form a coiled coil. Tyr-156 carries the phosphotyrosine; by ABL1 modification. The region spanning Ile-161–Ala-223 is the t-SNARE coiled-coil homology domain. A helical transmembrane segment spans residues Leu-228–Leu-248. The interval Leu-228 to Ile-274 is necessary and sufficient for localization to autophagosome. The Lumenal portion of the chain corresponds to Leu-249–Lys-253. The helical transmembrane segment at Val-254–Ile-274 threads the bilayer. The Cytoplasmic segment spans residues Gln-275–Ser-301. Phosphoserine is present on Ser-288. Positions Lys-298–Ser-301 match the Endoplasmic reticulum retention signal motif.

The protein belongs to the syntaxin family. As to quaternary structure, forms a SNARE complex composed of VAMP8, SNAP29 and STX17 involved in fusion of autophagosome with lysosome. May interact with VTI1B. Probably interacts with BET1, SCFD1 and SEC22B. Interacts with PTPN2 and ABL1; involved in STX17 phosphorylation. Interacts with COPB1. Interacts with TMED9 and TMED10; the interaction is direct. Interacts with VAMP7. Interacts with RUBCNL/PACER; promoting targeting of RUBCNL/PACER to autophagosome. Interacts with VAMP8, SNAP29, VPS39 and VPS41; these interactions are increased in the absence of TMEM39A. Interacts with IRGM; promoting STX17 recruitment to autophagosomes. Interacts with ATG8 proteins GABARAP and MAP1LC3B. Interacts with RNF115; this interaction enhances STX17 stability which in turn promotes autophagosome maturation. Interacts with RAB39A (GTP-bound); the interaction promotes autophagosome-lysosome membrane fusion driven by STX17-SNAP29-VAMP8. Interacts with RAB39B; the interaction may promote a different fonction in autophagy as compared with RAB39A. In terms of processing, dephosphorylation by PTPN2; regulates exit from the endoplasmic reticulum. Phosphorylated at Tyr-156 probably by ABL1.

The protein resides in the endoplasmic reticulum membrane. Its subcellular location is the smooth endoplasmic reticulum membrane. The protein localises to the endoplasmic reticulum-Golgi intermediate compartment membrane. It is found in the cytoplasmic vesicle. It localises to the autophagosome membrane. The protein resides in the COPII-coated vesicle membrane. Its subcellular location is the cytoplasm. The protein localises to the cytosol. It is found in the mitochondrion membrane. It localises to the autolysosome membrane. Functionally, SNAREs, soluble N-ethylmaleimide-sensitive factor-attachment protein receptors, are essential proteins for fusion of cellular membranes. SNAREs localized on opposing membranes assemble to form a trans-SNARE complex, an extended, parallel four alpha-helical bundle that drives membrane fusion. STX17 is a SNARE of the autophagosome involved in autophagy through the direct control of autophagosome membrane fusion with the lysosome membrane. May also play a role in the early secretory pathway where it may maintain the architecture of the endoplasmic reticulum-Golgi intermediate compartment/ERGIC and Golgi and/or regulate transport between the endoplasmic reticulum, the ERGIC and the Golgi. This Mus musculus (Mouse) protein is Syntaxin-17.